We begin with the raw amino-acid sequence, 545 residues long: CTP synthase (545 aa).

An amidoligase domain region spans residues 1-266 (MTTRYIFVTG…DDLVVKRFGL (266 aa)). A CTP-binding site is contributed by Ser-14. Ser-14 contributes to the UTP binding site. ATP-binding positions include 15–20 (SLGKGI) and Asp-72. Positions 72 and 140 each coordinate Mg(2+). Residues 147–149 (DIE), 187–192 (KTKPTQ), and Lys-223 each bind CTP. UTP is bound by residues 187–192 (KTKPTQ) and Lys-223. Residue 239–241 (KDV) coordinates ATP. The Glutamine amidotransferase type-1 domain maps to 291 to 542 (VIGMVGKYIE…IAAASAHQKR (252 aa)). Gly-352 provides a ligand contact to L-glutamine. The active-site Nucleophile; for glutamine hydrolysis is Cys-379. L-glutamine contacts are provided by residues 380 to 383 (LGMQ), Glu-403, and Arg-470. Catalysis depends on residues His-515 and Glu-517.

This sequence belongs to the CTP synthase family. As to quaternary structure, homotetramer.

The catalysed reaction is UTP + L-glutamine + ATP + H2O = CTP + L-glutamate + ADP + phosphate + 2 H(+). The enzyme catalyses L-glutamine + H2O = L-glutamate + NH4(+). It carries out the reaction UTP + NH4(+) + ATP = CTP + ADP + phosphate + 2 H(+). It participates in pyrimidine metabolism; CTP biosynthesis via de novo pathway; CTP from UDP: step 2/2. Allosterically activated by GTP, when glutamine is the substrate; GTP has no effect on the reaction when ammonia is the substrate. The allosteric effector GTP functions by stabilizing the protein conformation that binds the tetrahedral intermediate(s) formed during glutamine hydrolysis. Inhibited by the product CTP, via allosteric rather than competitive inhibition. Catalyzes the ATP-dependent amination of UTP to CTP with either L-glutamine or ammonia as the source of nitrogen. Regulates intracellular CTP levels through interactions with the four ribonucleotide triphosphates. The chain is CTP synthase from Shewanella baltica (strain OS155 / ATCC BAA-1091).